We begin with the raw amino-acid sequence, 248 residues long: 2,3-bisphosphoglycerate-dependent phosphoglycerate mutase (248 aa).

Substrate is bound by residues 8–15 (RHGESEWN), 21–22 (TG), R60, 87–90 (ERHY), K98, 114–115 (RR), and 183–184 (GN). H9 serves as the catalytic Tele-phosphohistidine intermediate. E87 functions as the Proton donor/acceptor in the catalytic mechanism.

It belongs to the phosphoglycerate mutase family. BPG-dependent PGAM subfamily.

It carries out the reaction (2R)-2-phosphoglycerate = (2R)-3-phosphoglycerate. It participates in carbohydrate degradation; glycolysis; pyruvate from D-glyceraldehyde 3-phosphate: step 3/5. Its function is as follows. Catalyzes the interconversion of 2-phosphoglycerate and 3-phosphoglycerate. This chain is 2,3-bisphosphoglycerate-dependent phosphoglycerate mutase, found in Coprothermobacter proteolyticus (strain ATCC 35245 / DSM 5265 / OCM 4 / BT).